We begin with the raw amino-acid sequence, 102 residues long: Protein translation factor SUI1 homolog (102 aa).

The protein belongs to the SUI1 family.

This chain is Protein translation factor SUI1 homolog, found in Cenarchaeum symbiosum (strain A).